Here is a 600-residue protein sequence, read N- to C-terminus: Elongation factor 4 (600 aa).

Positions 6–188 (QFIRNFSIIA…QITKQIPSPK (183 aa)) constitute a tr-type G domain. GTP-binding positions include 18–23 (DHGKST) and 135–138 (NKID).

Belongs to the TRAFAC class translation factor GTPase superfamily. Classic translation factor GTPase family. LepA subfamily.

It localises to the cell inner membrane. The enzyme catalyses GTP + H2O = GDP + phosphate + H(+). Functionally, required for accurate and efficient protein synthesis under certain stress conditions. May act as a fidelity factor of the translation reaction, by catalyzing a one-codon backward translocation of tRNAs on improperly translocated ribosomes. Back-translocation proceeds from a post-translocation (POST) complex to a pre-translocation (PRE) complex, thus giving elongation factor G a second chance to translocate the tRNAs correctly. Binds to ribosomes in a GTP-dependent manner. The chain is Elongation factor 4 from Leptospira interrogans serogroup Icterohaemorrhagiae serovar copenhageni (strain Fiocruz L1-130).